We begin with the raw amino-acid sequence, 270 residues long: 2-dehydro-3-deoxyphosphooctonate aldolase (270 aa).

Belongs to the KdsA family.

It is found in the cytoplasm. The catalysed reaction is D-arabinose 5-phosphate + phosphoenolpyruvate + H2O = 3-deoxy-alpha-D-manno-2-octulosonate-8-phosphate + phosphate. It participates in carbohydrate biosynthesis; 3-deoxy-D-manno-octulosonate biosynthesis; 3-deoxy-D-manno-octulosonate from D-ribulose 5-phosphate: step 2/3. Its pathway is bacterial outer membrane biogenesis; lipopolysaccharide biosynthesis. The sequence is that of 2-dehydro-3-deoxyphosphooctonate aldolase from Helicobacter hepaticus (strain ATCC 51449 / 3B1).